We begin with the raw amino-acid sequence, 508 residues long: Photosystem II CP47 reaction center protein (508 aa).

A run of 6 helical transmembrane segments spans residues Ser21–Ser36, Ile101–Trp115, Gly140–Phe156, Ile203–Ser218, Val237–Val252, and Ser457–Arg472.

It belongs to the PsbB/PsbC family. PsbB subfamily. PSII is composed of 1 copy each of membrane proteins PsbA, PsbB, PsbC, PsbD, PsbE, PsbF, PsbH, PsbI, PsbJ, PsbK, PsbL, PsbM, PsbT, PsbX, PsbY, PsbZ, Psb30/Ycf12, at least 3 peripheral proteins of the oxygen-evolving complex and a large number of cofactors. It forms dimeric complexes. The cofactor is Binds multiple chlorophylls. PSII binds additional chlorophylls, carotenoids and specific lipids..

It is found in the plastid. It localises to the chloroplast thylakoid membrane. Its function is as follows. One of the components of the core complex of photosystem II (PSII). It binds chlorophyll and helps catalyze the primary light-induced photochemical processes of PSII. PSII is a light-driven water:plastoquinone oxidoreductase, using light energy to abstract electrons from H(2)O, generating O(2) and a proton gradient subsequently used for ATP formation. This chain is Photosystem II CP47 reaction center protein, found in Platanus occidentalis (Sycamore).